Consider the following 499-residue polypeptide: Low-affinity inorganic phosphate transporter PitB (499 aa).

10 consecutive transmembrane segments (helical) span residues 5-25, 52-72, 94-114, 124-144, 155-175, 207-227, 233-253, 382-402, 430-450, and 473-493; these read FVGLDIYTGLLLLLALAFVLF, LAVVMAAFFNFFGVLLGGLSV, LAMVFSMLLAAIIWNLGTWFF, LIGAIIGIGLTNALLTGSSVM, IFSSLIVSPIVGLVIAGGLIF, PFWTRIALIVSAAGVAFSHGA, GIGLVMLVLVGIAPAGFVVNM, APVWIIMAVALALGIGTMIGW, AAVSIGLASYIGMPVSTTHVL, and ILMAWVFTLPAAIFLSGGLYW.

This sequence belongs to the inorganic phosphate transporter (PiT) (TC 2.A.20) family. Pit subfamily.

The protein resides in the cell inner membrane. The catalysed reaction is phosphate(in) + H(+)(in) = phosphate(out) + H(+)(out). Low-affinity inorganic phosphate transporter. This chain is Low-affinity inorganic phosphate transporter PitB, found in Escherichia coli (strain K12).